Here is a 388-residue protein sequence, read N- to C-terminus: F-box protein ETP2 (388 aa).

An F-box domain is found at 2 to 48 (KTIQEQLPNDLVEEILCRVPATSLRRLRSTCKAWNRLFKGDRILASK).

Interacts with EIN2 (via C-terminus).

In terms of biological role, negative regulator of EIN2 protein stability. This chain is F-box protein ETP2, found in Arabidopsis thaliana (Mouse-ear cress).